We begin with the raw amino-acid sequence, 1224 residues long: DNA-directed RNA polymerase subunit beta'' (1224 aa).

Residues Cys223, Cys297, Cys304, and Cys307 each contribute to the Zn(2+) site.

It belongs to the RNA polymerase beta' chain family. RpoC2 subfamily. In terms of assembly, in plastids the minimal PEP RNA polymerase catalytic core is composed of four subunits: alpha, beta, beta', and beta''. When a (nuclear-encoded) sigma factor is associated with the core the holoenzyme is formed, which can initiate transcription. Requires Zn(2+) as cofactor.

It localises to the plastid. The protein resides in the chloroplast. It carries out the reaction RNA(n) + a ribonucleoside 5'-triphosphate = RNA(n+1) + diphosphate. Its function is as follows. DNA-dependent RNA polymerase catalyzes the transcription of DNA into RNA using the four ribonucleoside triphosphates as substrates. The sequence is that of DNA-directed RNA polymerase subunit beta'' from Porphyra purpurea (Red seaweed).